The sequence spans 99 residues: Putative pterin-4-alpha-carbinolamine dehydratase (99 aa).

Belongs to the pterin-4-alpha-carbinolamine dehydratase family.

The catalysed reaction is (4aS,6R)-4a-hydroxy-L-erythro-5,6,7,8-tetrahydrobiopterin = (6R)-L-erythro-6,7-dihydrobiopterin + H2O. This Aquifex aeolicus (strain VF5) protein is Putative pterin-4-alpha-carbinolamine dehydratase.